Consider the following 310-residue polypeptide: Regulator of microtubule dynamics protein 1 (310 aa).

Lysine 165 carries the N6-succinyllysine modification. TPR repeat units follow at residues 168–204 (AICI…NPKD) and 222–258 (PWYQ…DPNF).

It belongs to the RMDN family. Interacts with microtubules.

The protein resides in the cytoplasm. The protein localises to the cytoskeleton. It is found in the spindle. It localises to the spindle pole. The chain is Regulator of microtubule dynamics protein 1 (Rmdn1) from Rattus norvegicus (Rat).